The sequence spans 149 residues: 3-dehydroquinate dehydratase (149 aa).

Tyr-26 acts as the Proton acceptor in catalysis. Asn-77, His-83, and Asp-90 together coordinate substrate. His-103 functions as the Proton donor in the catalytic mechanism. Substrate contacts are provided by residues 104–105 (LS) and Arg-114.

It belongs to the type-II 3-dehydroquinase family. In terms of assembly, homododecamer.

It catalyses the reaction 3-dehydroquinate = 3-dehydroshikimate + H2O. It functions in the pathway metabolic intermediate biosynthesis; chorismate biosynthesis; chorismate from D-erythrose 4-phosphate and phosphoenolpyruvate: step 3/7. In terms of biological role, catalyzes a trans-dehydration via an enolate intermediate. The polypeptide is 3-dehydroquinate dehydratase (Edwardsiella ictaluri (strain 93-146)).